Here is a 367-residue protein sequence, read N- to C-terminus: Mitogen-activated protein kinase 12 (367 aa).

One can recognise a Protein kinase domain in the interval 27-311 (YRDLQPVGSG…AGEALAHPYF (285 aa)). ATP-binding positions include 33 to 41 (VGSGAYGAV) and K56. D153 serves as the catalytic Proton acceptor. T183 bears the Phosphothreonine; by MAP2K3 and MAP2K6 mark. The short motif at 183–185 (TGY) is the TXY element. Residue Y185 is modified to Phosphotyrosine.

It belongs to the protein kinase superfamily. CMGC Ser/Thr protein kinase family. MAP kinase subfamily. In terms of assembly, monomer. Interacts with the PDZ domain of the syntrophin SNTA1. Interacts with SH3BP5. Interacts with LIN7C, SCRIB and SYNJ2BP. Interacts with PTPN4; this interaction induces the activation of PTPN4 phosphatase activity. It depends on Mg(2+) as a cofactor. Post-translationally, dually phosphorylated on Thr-183 and Tyr-185 by MAP2K3/MKK3 and MAP2K6/MKK6, which activates the enzyme. Ubiquitinated. Ubiquitination leads to degradation by the proteasome pathway. Highly expressed in skeletal muscle and heart.

The protein localises to the cytoplasm. It localises to the nucleus. The protein resides in the mitochondrion. The enzyme catalyses L-seryl-[protein] + ATP = O-phospho-L-seryl-[protein] + ADP + H(+). It carries out the reaction L-threonyl-[protein] + ATP = O-phospho-L-threonyl-[protein] + ADP + H(+). With respect to regulation, activated by phosphorylation on threonine and tyrosine. MAP2K3/MKK3 and MAP2K6/MKK6 are both essential for the activation of MAPK12 induced by environmental stress, whereas MAP2K6/MKK6 is the major MAPK12 activator in response to TNF-alpha. Its function is as follows. Serine/threonine kinase which acts as an essential component of the MAP kinase signal transduction pathway. MAPK12 is one of the four p38 MAPKs which play an important role in the cascades of cellular responses evoked by extracellular stimuli such as pro-inflammatory cytokines or physical stress leading to direct activation of transcription factors such as ELK1 and ATF2. Accordingly, p38 MAPKs phosphorylate a broad range of proteins and it has been estimated that they may have approximately 200 to 300 substrates each. Some of the targets are downstream kinases such as MAPKAPK2, which are activated through phosphorylation and further phosphorylate additional targets. Plays a role in myoblast differentiation and also in the down-regulation of cyclin D1 in response to hypoxia in adrenal cells suggesting MAPK12 may inhibit cell proliferation while promoting differentiation. Phosphorylates DLG1. Following osmotic shock, MAPK12 in the cell nucleus increases its association with nuclear DLG1, thereby causing dissociation of DLG1-SFPQ complexes. This function is independent of its catalytic activity and could affect mRNA processing and/or gene transcription to aid cell adaptation to osmolarity changes in the environment. Regulates UV-induced checkpoint signaling and repair of UV-induced DNA damage and G2 arrest after gamma-radiation exposure. MAPK12 is involved in the regulation of SLC2A1 expression and basal glucose uptake in L6 myotubes; and negatively regulates SLC2A4 expression and contraction-mediated glucose uptake in adult skeletal muscle. C-Jun (JUN) phosphorylation is stimulated by MAPK14 and inhibited by MAPK12, leading to a distinct AP-1 regulation. MAPK12 is required for the normal kinetochore localization of PLK1, prevents chromosomal instability and supports mitotic cell viability. MAPK12-signaling is also positively regulating the expansion of transient amplifying myogenic precursor cells during muscle growth and regeneration. The polypeptide is Mitogen-activated protein kinase 12 (MAPK12) (Homo sapiens (Human)).